A 1193-amino-acid polypeptide reads, in one-letter code: DNA-directed RNA polymerase subunit beta (1193 aa).

Over residues 1153–1162 (EMRDLEDDED) the composition is skewed to acidic residues. A disordered region spans residues 1153-1193 (EMRDLEDDEDAKQNEGLSLPNDEESEELVSADAERDVVTKE). Positions 1184–1193 (DAERDVVTKE) are enriched in basic and acidic residues.

This sequence belongs to the RNA polymerase beta chain family. In terms of assembly, the RNAP catalytic core consists of 2 alpha, 1 beta, 1 beta' and 1 omega subunit. When a sigma factor is associated with the core the holoenzyme is formed, which can initiate transcription.

It catalyses the reaction RNA(n) + a ribonucleoside 5'-triphosphate = RNA(n+1) + diphosphate. In terms of biological role, DNA-dependent RNA polymerase catalyzes the transcription of DNA into RNA using the four ribonucleoside triphosphates as substrates. In Bacillus licheniformis (strain ATCC 14580 / DSM 13 / JCM 2505 / CCUG 7422 / NBRC 12200 / NCIMB 9375 / NCTC 10341 / NRRL NRS-1264 / Gibson 46), this protein is DNA-directed RNA polymerase subunit beta.